The primary structure comprises 489 residues: Threonine/serine exporter (489 aa).

The next 10 helical transmembrane spans lie at 151-171, 174-194, 206-226, 233-253, 268-288, 314-334, 335-355, 356-376, 381-401, and 420-440; these read GFPV…VLLG, WQVS…TSFL, VVGG…ALQF, SQII…VQSL, FFET…GIQL, IIAG…EWSS, VIIA…FVVY, LGPV…GGLL, LIPP…GLAI, and IAVA…GEWI. The tract at residues 464–489 is disordered; sequence FQEEAEQNQRRQRKRPKTNQRFGNKR. The segment covering 473-489 has biased composition (basic residues); that stretch reads RRQRKRPKTNQRFGNKR.

The protein belongs to the ThrE exporter (TC 2.A.79) family.

The protein resides in the cell membrane. The enzyme catalyses L-threonine(in) + H(+)(out) = L-threonine(out) + H(+)(in). Its activity is regulated as follows. Transport is inhibited by the proton ionophore carbonyl cyanide m-chlorophenylhydrazone (CCCP). Its function is as follows. Catalyzes the export of L-threonine and L-serine from the cell to the extracellular environment. Export is dependent on the proton motive force. This chain is Threonine/serine exporter, found in Corynebacterium glutamicum (Brevibacterium saccharolyticum).